Here is a 139-residue protein sequence, read N- to C-terminus: MLQPARRKYRKEQKGRNTGISHSRGTAVSFGEFGLKAIGRGRITARQIEAARRAMTRHIKRGGRIWIRIFPDKPISNKPAEVRMGNGKGNPEYYVAEIQPGKMLYEMDGVDEALAREAFRLAAAKLPLLTTFVVRQVGQ.

Basic residues predominate over residues 1–13 (MLQPARRKYRKEQ). The interval 1–23 (MLQPARRKYRKEQKGRNTGISHS) is disordered.

Belongs to the universal ribosomal protein uL16 family. As to quaternary structure, part of the 50S ribosomal subunit.

In terms of biological role, binds 23S rRNA and is also seen to make contacts with the A and possibly P site tRNAs. This is Large ribosomal subunit protein uL16 from Herminiimonas arsenicoxydans.